Consider the following 370-residue polypeptide: Notoamide biosynthesis cluster protein J (370 aa).

The N-terminal stretch at 1 to 22 (MRIMSIMLHLLATILLSSAVSA) is a signal peptide. 7 N-linked (GlcNAc...) asparagine glycosylation sites follow: asparagine 159, asparagine 167, asparagine 192, asparagine 235, asparagine 282, asparagine 340, and asparagine 346.

Its function is as follows. Part of the gene cluster that mediates the biosynthesis of notoamide, a fungal indole alkaloid that belongs to a family of natural products containing a characteristic bicyclo[2.2.2]diazaoctane core. The first step of notoamide biosynthesis involves coupling of L-proline and L-tryptophan by the bimodular NRPS notE, to produce cyclo-L-tryptophan-L-proline called brevianamide F. The reverse prenyltransferase notF then acts as a deoxybrevianamide E synthase and converts brevianamide F to deoxybrevianamide E via reverse prenylation at C-2 of the indole ring leading to the bicyclo[2.2.2]diazaoctane core. Deoxybrevianamide E is further hydroxylated at C-6 of the indole ring, likely catalyzed by the cytochrome P450 monooxygenase notG, to yield 6-hydroxy-deoxybrevianamide E. 6-hydroxy-deoxybrevianamide E is a specific substrate of the prenyltransferase notC for normal prenylation at C-7 to produce 6-hydroxy-7-prenyl-deoxybrevianamide, also called notoamide S. As the proposed pivotal branching point in notoamide biosynthesis, notoamide S can be diverted to notoamide E through an oxidative pyran ring closure putatively catalyzed by either notH cytochrome P450 monooxygenase or the notD FAD-linked oxidoreductase. This step would be followed by an indole 2,3-epoxidation-initiated pinacol-like rearrangement catalyzed by the notB FAD-dependent monooxygenase leading to the formation of notoamide C and notoamide D. On the other hand notoamide S is converted to notoamide T by notH (or notD), a bifunctional oxidase that also functions as the intramolecular Diels-Alderase responsible for generation of (+)-notoamide T. To generate antipodal (-)-notoaminide T, notH' (or notD') in Aspergillus versicolor is expected to catalyze a Diels-Alder reaction leading to the opposite stereochemistry. The remaining oxidoreductase notD (or notH) likely catalyzes the oxidative pyran ring formation to yield (+)-stephacidin A. The FAD-dependent monooxygenase notI is highly similar to notB and is predicted to catalyze a similar conversion from (+)-stephacidin A to (-)-notoamide B via the 2,3-epoxidation of (+)-stephacidin A followed by a pinacol-type rearrangement. Finally, it remains unclear which enzyme could be responsible for the final hydroxylation steps leading to notoamide A and sclerotiamide. The function of notJ in the notoamide biosynthesis has not been determined yet. This chain is Notoamide biosynthesis cluster protein J, found in Aspergillus sp. (strain MF297-2).